The chain runs to 314 residues: Olfactory receptor 5P51 (314 aa).

Residues 1-28 are Extracellular-facing; the sequence is MAFLEDGNHTAVTEFVLFGLTDDPVLRV. Asparagine 8 carries N-linked (GlcNAc...) asparagine glycosylation. A helical transmembrane segment spans residues 29–49; that stretch reads ILFIIFLCIYLVNVSGNLSTI. Over 50–57 the chain is Cytoplasmic; that stretch reads LLIRVSSQ. A helical membrane pass occupies residues 58–78; it reads LHHPMYFFLSHLASVDVGYSS. Residues 79 to 102 are Extracellular-facing; it reads TVTPKMLANFLLERSTISYLGCTI. Residues cysteine 100 and cysteine 192 are joined by a disulfide bond. A helical membrane pass occupies residues 103-123; sequence QLFSGAFVGTLECFLLATMAY. Topologically, residues 124 to 136 are cytoplasmic; sequence DRFIAICNPLLYS. Residues 137-157 form a helical membrane-spanning segment; that stretch reads TKMSTQVCIQLLVGSYIGGFL. The Extracellular portion of the chain corresponds to 158 to 199; that stretch reads NASSFLLSFFPLLFCGPNRVNHYSCDLTPLIELSCSGSNVPI. The chain crosses the membrane as a helical span at residues 200–220; sequence VPASFCSAFVIIVTVSVIAIS. The Cytoplasmic portion of the chain corresponds to 221–240; the sequence is YTYILITILKMRSTEGRQKA. Residues 241–261 traverse the membrane as a helical segment; that stretch reads FSTCTSHLTAVTLYYGTVTFI. Residues 262–274 lie on the Extracellular side of the membrane; the sequence is YVMPKSSYSTDQN. A helical membrane pass occupies residues 275 to 295; that stretch reads KVVSVFYTVVIPMLNPIIYSL. The Cytoplasmic segment spans residues 296 to 314; it reads RNNEIKGALKRQLARKIFS.

It belongs to the G-protein coupled receptor 1 family.

The protein resides in the cell membrane. Its function is as follows. Potential odorant receptor. This is Olfactory receptor 5P51 from Mus musculus (Mouse).